We begin with the raw amino-acid sequence, 40 residues long: Photosystem II reaction center protein J (40 aa).

A helical membrane pass occupies residues 8 to 28 (IPLWLIGTVTGIPVIGLVGIF).

It belongs to the PsbJ family. In terms of assembly, PSII is composed of 1 copy each of membrane proteins PsbA, PsbB, PsbC, PsbD, PsbE, PsbF, PsbH, PsbI, PsbJ, PsbK, PsbL, PsbM, PsbT, PsbX, PsbY, PsbZ, Psb30/Ycf12, at least 3 peripheral proteins of the oxygen-evolving complex and a large number of cofactors. It forms dimeric complexes.

Its subcellular location is the plastid. The protein resides in the chloroplast thylakoid membrane. One of the components of the core complex of photosystem II (PSII). PSII is a light-driven water:plastoquinone oxidoreductase that uses light energy to abstract electrons from H(2)O, generating O(2) and a proton gradient subsequently used for ATP formation. It consists of a core antenna complex that captures photons, and an electron transfer chain that converts photonic excitation into a charge separation. The sequence is that of Photosystem II reaction center protein J from Cucumis sativus (Cucumber).